The sequence spans 303 residues: N-acetyl-D-glucosamine kinase (303 aa).

ATP is bound by residues 4-11 (GFDIGGTK) and 133-140 (GVGGGLVL). Zn(2+)-binding residues include His-157, Cys-177, Cys-179, and Cys-184.

The protein belongs to the ROK (NagC/XylR) family. NagK subfamily.

It carries out the reaction N-acetyl-D-glucosamine + ATP = N-acetyl-D-glucosamine 6-phosphate + ADP + H(+). It functions in the pathway cell wall biogenesis; peptidoglycan recycling. Catalyzes the phosphorylation of N-acetyl-D-glucosamine (GlcNAc) derived from cell-wall degradation, yielding GlcNAc-6-P. In Salmonella arizonae (strain ATCC BAA-731 / CDC346-86 / RSK2980), this protein is N-acetyl-D-glucosamine kinase.